The following is a 184-amino-acid chain: Photosystem I assembly protein Ycf4 (184 aa).

2 consecutive transmembrane segments (helical) span residues 22–42 (FCWA…GISS) and 64–84 (IVMS…WSTI).

This sequence belongs to the Ycf4 family.

The protein resides in the plastid. Its subcellular location is the chloroplast thylakoid membrane. Its function is as follows. Seems to be required for the assembly of the photosystem I complex. The polypeptide is Photosystem I assembly protein Ycf4 (Piper cenocladum (Ant piper)).